The primary structure comprises 419 residues: Histidine--tRNA ligase (419 aa).

This sequence belongs to the class-II aminoacyl-tRNA synthetase family. As to quaternary structure, homodimer.

It is found in the cytoplasm. The enzyme catalyses tRNA(His) + L-histidine + ATP = L-histidyl-tRNA(His) + AMP + diphosphate + H(+). This is Histidine--tRNA ligase from Mycoplasmoides gallisepticum (strain R(low / passage 15 / clone 2)) (Mycoplasma gallisepticum).